Reading from the N-terminus, the 351-residue chain is Biotin synthase (351 aa).

A Radical SAM core domain is found at 48-265 (NKVRIHILDN…LCMFRLINPD (218 aa)). [4Fe-4S] cluster-binding residues include Cys63, Cys67, and Cys70. [2Fe-2S] cluster is bound by residues Cys107, Cys139, Cys199, and Arg269.

The protein belongs to the radical SAM superfamily. Biotin synthase family. In terms of assembly, homodimer. Requires [4Fe-4S] cluster as cofactor. [2Fe-2S] cluster is required as a cofactor.

It catalyses the reaction (4R,5S)-dethiobiotin + (sulfur carrier)-SH + 2 reduced [2Fe-2S]-[ferredoxin] + 2 S-adenosyl-L-methionine = (sulfur carrier)-H + biotin + 2 5'-deoxyadenosine + 2 L-methionine + 2 oxidized [2Fe-2S]-[ferredoxin]. The protein operates within cofactor biosynthesis; biotin biosynthesis; biotin from 7,8-diaminononanoate: step 2/2. Functionally, catalyzes the conversion of dethiobiotin (DTB) to biotin by the insertion of a sulfur atom into dethiobiotin via a radical-based mechanism. The polypeptide is Biotin synthase (Leptospira interrogans serogroup Icterohaemorrhagiae serovar copenhageni (strain Fiocruz L1-130)).